The following is an 854-amino-acid chain: Putative COX1/OXI3 intron 2 protein (854 aa).

The Reverse transcriptase domain maps to 329–613; the sequence is LSKDINTNMF…EGVSFLGYDV (285 aa).

It is found in the mitochondrion. In Saccharomyces cerevisiae (strain ATCC 204508 / S288c) (Baker's yeast), this protein is Putative COX1/OXI3 intron 2 protein (AI2).